A 30-amino-acid chain; its full sequence is MRTGKQYLKSLNDGRTVILDGEVVGNVLXH.

Homotrimer. The cofactor is FAD.

The catalysed reaction is pyrrole-2-carboxylate + NADH + O2 + H(+) = 5-hydroxypyrrole-2-carboxylate + NAD(+) + H2O. Its function is as follows. Monooxygenase that initiates the degradation of pyrrole-2-carboxylate, which allows Arthrobacter sp. strain Py1 to grow on pyrrole-2-carboxylate as sole carbon, nitrogen, and energy source. To a lesser extent, can also use pyrrole, pyrrole-2-aldehyde, and indole-2-carboxylate as substrate. The chain is Pyrrole-2-carboxylate oxygenase from Arthrobacter sp. (strain Py1).